Consider the following 269-residue polypeptide: MNKRKGLVLLLSVFALLGGGCSQTNNKTDRQAQTVIVGTGTDFPNIAFLNEKGELTGYDIEVMKAIDKELPQYTFEFKTMDFSNLLTSLGNKKIDVIAHNMAKNKEREKRFLYHKVPYNYSPMYITVKEDNHKIHTLKDLHGKTVIVGATSNAADYITKYNKTHGSPIHLKYAGQGSNDTANQIETGRADATIATPFAVDFQNKTHAFRQKTVGDVLLDTEVYFMFNKGSQTLADDTDQAIKKLEKNGTLKKLSRKWLGADYSKSSFEK.

The signal sequence occupies residues 1-20; sequence MNKRKGLVLLLSVFALLGGG. C21 is lipidated: N-palmitoyl cysteine. Residue C21 is the site of S-diacylglycerol cysteine attachment.

The protein belongs to the bacterial solute-binding protein 3 family. In terms of assembly, the complex is composed of two ATP-binding proteins (TcyN), two transmembrane proteins (TcyL and TcyM) and two solute-binding proteins (TcyJ and TcyK).

It localises to the cell membrane. Part of the ABC transporter complex TcyJKLMN involved in L-cystine import. Is also involved in cystathionine, djenkolate, and S-methylcysteine transport. This chain is L-cystine-binding protein TcyJ (tcyJ), found in Bacillus subtilis (strain 168).